The following is a 523-amino-acid chain: REST corepressor 2 (523 aa).

The disordered stretch occupies residues 1–43 (MPSVMEKPSAGSGILSRSRAKTAPNGGQPHSEDDSSEEEHSHD). The span at 30–43 (HSEDDSSEEEHSHD) shows a compositional bias: basic and acidic residues. Serine 31, serine 35, serine 36, and serine 63 each carry phosphoserine. The ELM2 domain maps to 44–129 (SMIRVGTNYQ…KSLADLANFT (86 aa)). A Glycyl lysine isopeptide (Lys-Gly) (interchain with G-Cter in SUMO2) cross-link involves residue lysine 88. Positions 130-181 (PFPDEWTVEDKVLFEQAFGFHGKCFQRIQQMLPDKVIPSLVKYYYSWKKTRS) constitute an SANT 1 domain. The disordered stretch occupies residues 185 to 244 (VMDRQARRLGGRKDKEDSDELEEGRGAVSEGEPDTGDPKREPLPSRPLNARPGPGKKEVQ). Serine 202 carries the post-translational modification Phosphoserine. A coiled-coil region spans residues 283-314 (TLRGLDSQLISLKRQVQSMKQTNSSLRQALEG). Residues 327–378 (KFNSRWTTDEQLLAVQAIRRYGKDFGAIAEVIGNKTLTQVKTFFVSYRRRFN) enclose the SANT 2 domain. Positions 387 to 523 (EAEQDGAPAA…APLEPPAPSL (137 aa)) are disordered. Positions 432 to 459 (SVPPAPPPPPPPTSLSQPPPLLRPPLPT) are enriched in pro residues. A compositionally biased stretch (low complexity) spans 460-482 (APTLLRQPPPLQQGRFLQPRLAP). Arginine 479 carries the asymmetric dimethylarginine modification. Residues 504-523 (GPQPPPTLVGAPLEPPAPSL) show a composition bias toward pro residues.

The protein belongs to the CoREST family. Predominantly, but not exclusively, expressed in neural tissue. Strongly expressed in neural domains of the developing brain of the developing mouse CNS.

It is found in the nucleus. May act as a component of a corepressor complex that represses transcription. The protein is REST corepressor 2 (Rcor2) of Mus musculus (Mouse).